The chain runs to 231 residues: Modulator of macroautophagy TMEM150B-B (231 aa).

Position 1 (Met1) is a topological domain, cytoplasmic. A helical membrane pass occupies residues 2–22 (WAWALLPICLTVWATGGIWIV). At 23–50 (YAMSVSNGSVNLSDGFPYISVSGTYPPQ) the chain is on the extracellular side. N-linked (GlcNAc...) asparagine glycans are attached at residues Asn29 and Asn33. The chain crosses the membrane as a helical span at residues 51 to 71 (SCVFGQVLNVGAMLAVWISVI). Residues 72–83 (RFQQIRDYNCHS) lie on the Cytoplasmic side of the membrane. The chain crosses the membrane as a helical span at residues 84–104 (VLNSVSLATGILCALGTSIVG). Residues 105–115 (NFQQSNQLQTH) lie on the Extracellular side of the membrane. The helical transmembrane segment at 116–136 (LAGAFLAFIIGNVYFWMQTAL) threads the bilayer. Residues 137–150 (TYMVKPKHGGCYIG) are Cytoplasmic-facing. The chain crosses the membrane as a helical span at residues 151–171 (PIRFCLSIACTALIVAMAVFL). At 172-183 (KMNMKSVSAICE) the chain is on the extracellular side. Residues 184 to 204 (WIVAMILFLLYGLFAVDFWHL) form a helical membrane-spanning segment. Residues 205-231 (DGHFFHVKKRRTVIPNEMEVSTVTLSI) are Cytoplasmic-facing.

It belongs to the DRAM/TMEM150 family.

It is found in the cell membrane. The protein localises to the endosome membrane. It localises to the cytoplasmic vesicle. Its subcellular location is the autophagosome membrane. Modulator of macroautophagy that causes accumulation of autophagosomes under basal conditions and enhances autophagic flux. Represses cell death and promotes long-term clonogenic survival of cells grown in the absence of glucose in a macroautophagy-independent manner. May have some role in extracellular matrix engulfment or growth factor receptor recycling, both of which can modulate cell survival. The polypeptide is Modulator of macroautophagy TMEM150B-B (Xenopus laevis (African clawed frog)).